We begin with the raw amino-acid sequence, 58 residues long: Large ribosomal subunit protein uL30 (58 aa).

The protein belongs to the universal ribosomal protein uL30 family. Part of the 50S ribosomal subunit.

This is Large ribosomal subunit protein uL30 from Bacteroides thetaiotaomicron (strain ATCC 29148 / DSM 2079 / JCM 5827 / CCUG 10774 / NCTC 10582 / VPI-5482 / E50).